We begin with the raw amino-acid sequence, 300 residues long: Type II methyltransferase M.XycI (300 aa).

Residues 109-129 (RGYRAPDKKNPARAMDVRPDT) are disordered. The segment covering 112–127 (RAPDKKNPARAMDVRP) has biased composition (basic and acidic residues).

This sequence belongs to the N(4)/N(6)-methyltransferase family. N(4) subfamily.

It catalyses the reaction a 2'-deoxycytidine in DNA + S-adenosyl-L-methionine = an N(4)-methyl-2'-deoxycytidine in DNA + S-adenosyl-L-homocysteine + H(+). In terms of biological role, a beta subtype methylase, recognizes the double-stranded sequence 5'-CCCGGG-3', methylates C-2 on both strands, and protects the DNA from cleavage by the XcyI endonuclease. This chain is Type II methyltransferase M.XycI (xcyIM), found in Xanthomonas campestris pv. cyanopsidis.